Reading from the N-terminus, the 369-residue chain is Endophilin-A (369 aa).

Positions Thr18 to Ser248 constitute a BAR domain. Residues Gln227–Glu247 are a coiled coil. Low complexity predominate over residues Gly275–Pro294. The tract at residues Gly275–Lys296 is disordered. Residues Gln305–Pro364 form the SH3 domain.

This sequence belongs to the endophilin family.

It localises to the cytoplasm. The protein resides in the membrane. In terms of biological role, required presynaptically at the neuromuscular junction. Implicated in synaptic vesicle endocytosis. The sequence is that of Endophilin-A from Drosophila pseudoobscura pseudoobscura (Fruit fly).